Here is a 95-residue protein sequence, read N- to C-terminus: Glutamyl-tRNA(Gln) amidotransferase subunit C (95 aa).

This sequence belongs to the GatC family. As to quaternary structure, heterotrimer of A, B and C subunits.

It carries out the reaction L-glutamyl-tRNA(Gln) + L-glutamine + ATP + H2O = L-glutaminyl-tRNA(Gln) + L-glutamate + ADP + phosphate + H(+). The enzyme catalyses L-aspartyl-tRNA(Asn) + L-glutamine + ATP + H2O = L-asparaginyl-tRNA(Asn) + L-glutamate + ADP + phosphate + 2 H(+). In terms of biological role, allows the formation of correctly charged Asn-tRNA(Asn) or Gln-tRNA(Gln) through the transamidation of misacylated Asp-tRNA(Asn) or Glu-tRNA(Gln) in organisms which lack either or both of asparaginyl-tRNA or glutaminyl-tRNA synthetases. The reaction takes place in the presence of glutamine and ATP through an activated phospho-Asp-tRNA(Asn) or phospho-Glu-tRNA(Gln). The chain is Glutamyl-tRNA(Gln) amidotransferase subunit C from Moraxella catarrhalis (Branhamella catarrhalis).